Consider the following 671-residue polypeptide: Probable potassium transport system protein Kup 2 (671 aa).

12 helical membrane passes run 18–38 (GFLIALGIVYGDIGTSPLYAM), 60–80 (VSLVIWTLTLITTVKYVLIAL), 103–123 (WLIIPAMIGGATLLADGALTP), 146–166 (AVMVTTLIILAFLFLIQRFGA), 173–193 (FGPIMFIWFGFLGVSGLINSF), 218–238 (AGFFILGSIFLVTTGAEALYS), 252–272 (WPFVKICIILSYCGQGAWLLA), 292–312 (MVIYVVILSTLAAIIASQALI), 343–363 (LYIPAVNFALWVTTSFFVLYF), 373–393 (YSLAITITMLMTTTLLTYFLI), 402–422 (IAIISIGLFCIEGSFFAASLV), and 424–444 (FINGAYIVVLIALAIIFVMFI).

Belongs to the HAK/KUP transporter (TC 2.A.72) family.

It localises to the cell membrane. The catalysed reaction is K(+)(in) + H(+)(in) = K(+)(out) + H(+)(out). Transport of potassium into the cell. Likely operates as a K(+):H(+) symporter. This is Probable potassium transport system protein Kup 2 from Lactococcus lactis subsp. lactis (strain IL1403) (Streptococcus lactis).